We begin with the raw amino-acid sequence, 481 residues long: UDP-N-acetylmuramate--L-alanine ligase (481 aa).

Residue 126–132 (GTHGKTT) coordinates ATP.

It belongs to the MurCDEF family.

It is found in the cytoplasm. The enzyme catalyses UDP-N-acetyl-alpha-D-muramate + L-alanine + ATP = UDP-N-acetyl-alpha-D-muramoyl-L-alanine + ADP + phosphate + H(+). Its pathway is cell wall biogenesis; peptidoglycan biosynthesis. Cell wall formation. The polypeptide is UDP-N-acetylmuramate--L-alanine ligase (Marinobacter nauticus (strain ATCC 700491 / DSM 11845 / VT8) (Marinobacter aquaeolei)).